We begin with the raw amino-acid sequence, 458 residues long: Plant UBX domain-containing protein 2 (458 aa).

Positions 1 to 103 are disordered; it reads MDDVKDKLKG…APQDGFDPYG (103 aa). The span at 44-54 shows a compositional bias: polar residues; it reads PIQNRFNSSQA. Residues 56 to 70 show a composition bias toward pro residues; sequence NPTPRPKPNPNPLPE. The segment covering 74-85 has biased composition (polar residues); sequence SSSDQKISGSTR. The C2H2-type; atypical zinc-finger motif lies at 121–143; sequence FECPICKNPFTSEEEVSVHVESC. The 68-residue stretch at 181-248 folds into the PUB domain; the sequence is SSIDVLLRLF…EIWAVMDVPS (68 aa). The 85-residue stretch at 349-433 folds into the UBX domain; sequence KRYKRSMIRV…ELVPSALIRF (85 aa).

As to quaternary structure, interacts with CDC48A in vitro and co-fractionates with membrane-associated but not soluble CDC48A in vivo.

It localises to the membrane. Functionally, facilitates the interaction of SYP31 and CDC48A, thereby regulating an CDC48A membrane-associated function. Appears to act as a negative regulator mediating the powdery mildew-plant interaction. The polypeptide is Plant UBX domain-containing protein 2 (Arabidopsis thaliana (Mouse-ear cress)).